Here is a 20-residue protein sequence, read N- to C-terminus: Equinatoxin-1 (20 aa).

The plays an important role in the hemolytic activity stretch occupies residues 3–12 (AVAGAVIEGA). Residues 11-20 (GASLTFNVLQ) form an N-terminal region region.

It belongs to the actinoporin family. Sea anemone subfamily. In terms of assembly, octamer or nonamer in membranes. Monomer in the soluble state.

It is found in the secreted. The protein resides in the nematocyst. Its subcellular location is the target cell membrane. Functionally, pore-forming protein that forms cations-selective hydrophilic pores of around 1 nm and causes cardiac stimulation and cytolysis. Pore formation is a multi-step process that involves specific recognition of membrane sphingomyelin (but neither cholesterol nor phosphatidylcholine) using aromatic rich region and adjacent phosphocholine (POC) binding site, firm binding to the membrane (mainly driven by hydrophobic interactions) accompanied by the transfer of the N-terminal region to the lipid-water interface and finally pore formation after oligomerization of monomers. Cytolytic effects include red blood cells hemolysis, platelet aggregation and lysis, cytotoxic and cytostatic effects on fibroblasts. Lethality in mammals has been ascribed to severe vasospasm of coronary vessels, cardiac arrhythmia, and inotropic effects. In Actinia equina (Beadlet anemone), this protein is Equinatoxin-1.